Here is a 117-residue protein sequence, read N- to C-terminus: Large ribosomal subunit protein bL20c (117 aa).

The protein belongs to the bacterial ribosomal protein bL20 family.

The protein localises to the plastid. It is found in the chloroplast. Functionally, binds directly to 23S ribosomal RNA and is necessary for the in vitro assembly process of the 50S ribosomal subunit. It is not involved in the protein synthesizing functions of that subunit. The chain is Large ribosomal subunit protein bL20c from Lemna minor (Common duckweed).